We begin with the raw amino-acid sequence, 199 residues long: Glycerol-3-phosphate acyltransferase (199 aa).

Transmembrane regions (helical) follow at residues 3-23, 55-75, 79-99, 113-133, and 155-175; these read IKIL…AYIV, VITL…ATFI, FSYS…TIFL, VFFA…GLAF, and YFLG…LLII.

The protein belongs to the PlsY family. As to quaternary structure, probably interacts with PlsX.

Its subcellular location is the cell inner membrane. The catalysed reaction is an acyl phosphate + sn-glycerol 3-phosphate = a 1-acyl-sn-glycero-3-phosphate + phosphate. Its pathway is lipid metabolism; phospholipid metabolism. Catalyzes the transfer of an acyl group from acyl-phosphate (acyl-PO(4)) to glycerol-3-phosphate (G3P) to form lysophosphatidic acid (LPA). This enzyme utilizes acyl-phosphate as fatty acyl donor, but not acyl-CoA or acyl-ACP. In Endomicrobium trichonymphae, this protein is Glycerol-3-phosphate acyltransferase.